Here is a 336-residue protein sequence, read N- to C-terminus: Biotin synthase (336 aa).

Positions 54 to 281 (NAIQLSTLLS…KAMVRLSAGR (228 aa)) constitute a Radical SAM core domain. Cysteine 69, cysteine 73, and cysteine 76 together coordinate [4Fe-4S] cluster. Residues cysteine 113, cysteine 144, cysteine 204, and arginine 276 each contribute to the [2Fe-2S] cluster site.

It belongs to the radical SAM superfamily. Biotin synthase family. As to quaternary structure, homodimer. The cofactor is [4Fe-4S] cluster. [2Fe-2S] cluster serves as cofactor.

It carries out the reaction (4R,5S)-dethiobiotin + (sulfur carrier)-SH + 2 reduced [2Fe-2S]-[ferredoxin] + 2 S-adenosyl-L-methionine = (sulfur carrier)-H + biotin + 2 5'-deoxyadenosine + 2 L-methionine + 2 oxidized [2Fe-2S]-[ferredoxin]. The protein operates within cofactor biosynthesis; biotin biosynthesis; biotin from 7,8-diaminononanoate: step 2/2. In terms of biological role, catalyzes the conversion of dethiobiotin (DTB) to biotin by the insertion of a sulfur atom into dethiobiotin via a radical-based mechanism. This is Biotin synthase from Burkholderia mallei (strain ATCC 23344).